The sequence spans 324 residues: MEDLALRPKTLDEYIGQERLKQKLRVYLEAAKARKEPLEHLLLFGPPGLGKTTLAHVIAHELGVNLRVTSGPAIEKPGDLAAILANSLEEGDILFIDEIHRLSRQAEEHLYPAMEDFVMDIVIGQGPAARTIRLELPRFALIGATTRPGLITAPLLSRFGIVEHLEYYTPEELAQGVMRDARLLGVRITEEAALEIGRRSRGTMRVAKRLFRRVRDFAQVEGEEVITRERALEALAALGLDELGLEKRDREILEVLILRFGAGPVGLATLATALSEDPGTLEEVHEPYLIRQGLLKRTPRGRVATELAYRHLGYPPPVGPLLEP.

Residues 1–168 (MEDLALRPKT…FGIVEHLEYY (168 aa)) are large ATPase domain (RuvB-L). Residues leucine 6, arginine 7, glycine 48, lysine 51, threonine 52, threonine 53, 115–117 (EDF), arginine 158, tyrosine 168, and arginine 205 contribute to the ATP site. Threonine 52 is a Mg(2+) binding site. The small ATPAse domain (RuvB-S) stretch occupies residues 169-239 (TPEELAQGVM…RALEALAALG (71 aa)). The interval 242-324 (ELGLEKRDRE…PPPVGPLLEP (83 aa)) is head domain (RuvB-H). DNA-binding residues include arginine 297 and arginine 302.

It belongs to the RuvB family. As to quaternary structure, homohexamer. Forms an RuvA(8)-RuvB(12)-Holliday junction (HJ) complex. HJ DNA is sandwiched between 2 RuvA tetramers; dsDNA enters through RuvA and exits via RuvB. An RuvB hexamer assembles on each DNA strand where it exits the tetramer. Each RuvB hexamer is contacted by two RuvA subunits (via domain III) on 2 adjacent RuvB subunits; this complex drives branch migration. In the full resolvosome a probable DNA-RuvA(4)-RuvB(12)-RuvC(2) complex forms which resolves the HJ.

The protein localises to the cytoplasm. The enzyme catalyses ATP + H2O = ADP + phosphate + H(+). With respect to regulation, the ATPase activity of RuvB is enhanced by RuvA. The RuvA-RuvB-RuvC complex processes Holliday junction (HJ) DNA during genetic recombination and DNA repair, while the RuvA-RuvB complex plays an important role in the rescue of blocked DNA replication forks via replication fork reversal (RFR). RuvA specifically binds to HJ cruciform DNA, conferring on it an open structure. The RuvB hexamer acts as an ATP-dependent pump, pulling dsDNA into and through the RuvAB complex. RuvB forms 2 homohexamers on either side of HJ DNA bound by 1 or 2 RuvA tetramers; 4 subunits per hexamer contact DNA at a time. Coordinated motions by a converter formed by DNA-disengaged RuvB subunits stimulates ATP hydrolysis and nucleotide exchange. Immobilization of the converter enables RuvB to convert the ATP-contained energy into a lever motion, pulling 2 nucleotides of DNA out of the RuvA tetramer per ATP hydrolyzed, thus driving DNA branch migration. The RuvB motors rotate together with the DNA substrate, which together with the progressing nucleotide cycle form the mechanistic basis for DNA recombination by continuous HJ branch migration. Branch migration allows RuvC to scan DNA until it finds its consensus sequence, where it cleaves and resolves cruciform DNA. Its function is as follows. Has Mg(2+)-, DNA-dependent ATPase activity; dsDNA and supercoiled DNA but not ssDNA stimulate activity. Binds to linear dsDNA in the absence of ATP or ATP-gamma-S. This subunit can promote Holliday junction migration alone in vitro. Partially complements an E.coli deletion for UV sensitivity. In Thermus thermophilus, this protein is Holliday junction branch migration complex subunit RuvB.